Reading from the N-terminus, the 66-residue chain is Beta-mammal toxin Co2 (66 aa).

An LCN-type CS-alpha/beta domain is found at 1-66 (KEGYIVNYHD…VWPLPKKRCN (66 aa)). 4 disulfide bridges follow: Cys12-Cys65, Cys16-Cys41, Cys25-Cys46, and Cys29-Cys48.

In terms of tissue distribution, expressed by the venom gland.

The protein localises to the secreted. In terms of biological role, beta toxins bind voltage-independently at site-4 of sodium channels (Nav) and shift the voltage of activation toward more negative potentials thereby affecting sodium channel activation and promoting spontaneous and repetitive firing. This toxin acts on human Nav1.1/SCN1A, Nav1.2/SCN2A, Nav1.4/SCN4A and Nav1.6/SCN8A voltage-gated sodium channels. Also, it reduces the peak of sodium currents in Nav1.5/SCN5A at all potentials. In vivo, is lethal to mice when intraperitoneally injected at a dose of 5ug. No activity is observed when injected into crickets or woodlice. This Centruroides ornatus (Scorpion) protein is Beta-mammal toxin Co2.